Here is a 569-residue protein sequence, read N- to C-terminus: Peroxynitrite isomerase THAP4 (569 aa).

Residues 1-85 form a THAP-type zinc finger; the sequence is MVICCAAVNC…LKPTAVPSIF (85 aa). Residues 88 to 216 are disordered; that stretch reads SEKKRGAGGH…DKSGISMDDF (129 aa). 2 stretches are compositionally biased toward polar residues: residues 121–130 and 157–167; these read IGSSLSSSDN and AVSQEQGQSLE. Position 159 is a phosphoserine (Ser-159). The short motif at 230–233 is the HCFC1-binding motif (HBM) element; sequence LHSY. At Ser-234 the chain carries Phosphoserine. The disordered stretch occupies residues 235–312; sequence FSSKHTRERP…EAVQSEHSDA (78 aa). Residues 242–262 show a composition bias toward basic and acidic residues; sequence ERPSVPREPMDRKRLKREMEP. Over residues 265–279 the composition is skewed to polar residues; sequence SGNSVAQSPPSSSLT. Residues 280-289 show a composition bias toward low complexity; the sequence is ATPQKASQSP. The interval 407–569 is nitrobindin; sequence PPKLNPVVEP…LHITYKKVTP (163 aa). Residues Thr-436 and His-559 each coordinate heme b.

This sequence in the C-terminal section; belongs to the nitrobindin family. In terms of assembly, homodimer. The cofactor is heme b.

It is found in the cytoplasm. The protein resides in the nucleus. The catalysed reaction is peroxynitrite = nitrate. The protein operates within nitrogen metabolism. In terms of biological role, heme-binding protein able to scavenge peroxynitrite and to protect free L-tyrosine against peroxynitrite-mediated nitration, by acting as a peroxynitrite isomerase that converts peroxynitrite to nitrate. Therefore, this protein likely plays a role in peroxynitrite sensing and in the detoxification of reactive nitrogen and oxygen species (RNS and ROS, respectively). Is able to bind nitric oxide (NO) in vitro, but may act as a sensor of peroxynitrite levels in vivo, possibly modulating the transcriptional activity residing in the N-terminal region. This Mus musculus (Mouse) protein is Peroxynitrite isomerase THAP4.